Here is a 115-residue protein sequence, read N- to C-terminus: Small ribosomal subunit protein bS16 (115 aa).

Positions 81-115 are disordered; the sequence is GLAPKPTYNEQPKKSAPKAKAQERAKAAADAAAAA.

It belongs to the bacterial ribosomal protein bS16 family.

This Gluconobacter oxydans (strain 621H) (Gluconobacter suboxydans) protein is Small ribosomal subunit protein bS16.